A 453-amino-acid polypeptide reads, in one-letter code: Gamma-aminobutyric acid receptor subunit alpha-6 (453 aa).

An N-terminal signal peptide occupies residues 1–19 (MLLLLPWLFSLLWIENAQA). The Extracellular segment spans residues 20–243 (QLEDEGNFYS…FHLQRKMGYF (224 aa)). An N-linked (GlcNAc...) asparagine glycan is attached at N31. 4-aminobutanoate is bound at residue R84. N-linked (GlcNAc...) asparagine glycosylation is found at N128 and N141. T147 contacts 4-aminobutanoate. C156 and C170 are oxidised to a cystine. A helical transmembrane segment spans residues 244–264 (MIQIYTPCIMTVILSQVSFWI). The Cytoplasmic portion of the chain corresponds to 265–270 (NKESVP). Residues 271-290 (ARTVFGITTVLTMTTLSISA) traverse the membrane as a helical segment. Over 291–304 (RHSLPKVSYATAMD) the chain is Extracellular. A helical transmembrane segment spans residues 305-325 (WFIAVCFAFVFSALIEFAAVN). Over 326–422 (YFTNLQSQKA…GTSKIDQYSR (97 aa)) the chain is Cytoplasmic. Position 375 is a phosphoserine (S375). Residue T403 is modified to Phosphothreonine. The helical transmembrane segment at 423–443 (ILFPVAFAGFNLVYWIVYLSK) threads the bilayer. The Extracellular portion of the chain corresponds to 444–453 (DTMEVSSTVE).

It belongs to the ligand-gated ion channel (TC 1.A.9) family. Gamma-aminobutyric acid receptor (TC 1.A.9.5) subfamily. GABRA6 sub-subfamily. As to quaternary structure, heteropentamer, formed by a combination of alpha (GABRA1-6), beta (GABRB1-3), gamma (GABRG1-3), delta (GABRD), epsilon (GABRE), rho (GABRR1-3), pi (GABRP) and theta (GABRQ) chains, each subunit exhibiting distinct physiological and pharmacological properties. Binds UBQLN1. As to expression, expressed in brain, in cerebellar granule cells.

The protein localises to the postsynaptic cell membrane. It localises to the cell membrane. It carries out the reaction chloride(in) = chloride(out). Functionally, alpha subunit of the heteropentameric ligand-gated chloride channel gated by gamma-aminobutyric acid (GABA), a major inhibitory neurotransmitter in the brain. GABA-gated chloride channels, also named GABA(A) receptors (GABAAR), consist of five subunits arranged around a central pore and contain GABA active binding site(s) located at the alpha and beta subunit interface(s). When activated by GABA, GABAARs selectively allow the flow of chloride anions across the cell membrane down their electrochemical gradient. Alpha-6/GABRA6 subunits are found at both synaptic and extrasynaptic sites. Chloride influx into the postsynaptic neuron following GABAAR opening decreases the neuron ability to generate a new action potential, thereby reducing nerve transmission. Extrasynaptic alpha-6-containing receptors contribute to the tonic GABAergic inhibition. Alpha-6 subunits are also present on glutamatergic synapses. This is Gamma-aminobutyric acid receptor subunit alpha-6 from Rattus norvegicus (Rat).